The chain runs to 507 residues: ATP synthase subunit alpha (507 aa).

Position 170–177 (Gly-170–Thr-177) interacts with ATP.

Belongs to the ATPase alpha/beta chains family. F-type ATPases have 2 components, CF(1) - the catalytic core - and CF(0) - the membrane proton channel. CF(1) has five subunits: alpha(3), beta(3), gamma(1), delta(1), epsilon(1). CF(0) has three main subunits: a(1), b(2) and c(9-12). The alpha and beta chains form an alternating ring which encloses part of the gamma chain. CF(1) is attached to CF(0) by a central stalk formed by the gamma and epsilon chains, while a peripheral stalk is formed by the delta and b chains.

It localises to the cell inner membrane. It carries out the reaction ATP + H2O + 4 H(+)(in) = ADP + phosphate + 5 H(+)(out). Functionally, produces ATP from ADP in the presence of a proton gradient across the membrane. The alpha chain is a regulatory subunit. The protein is ATP synthase subunit alpha of Thermosipho melanesiensis (strain DSM 12029 / CIP 104789 / BI429).